A 670-amino-acid chain; its full sequence is Kinesin-like protein KIF2B (670 aa).

T122 is subject to Phosphothreonine; by PLK1. A coiled-coil region spans residues 146 to 173 (CLQEIEKVQKQREKRRRLQQEIRARRAL). At S201 the chain carries Phosphoserine; by PLK1. The Kinesin motor domain maps to 210–540 (RICVCVRKRP…LRYANRVKEL (331 aa)). 300 to 307 (GQTGSGKT) lines the ATP pocket.

It belongs to the TRAFAC class myosin-kinesin ATPase superfamily. Kinesin family. MCAK/KIF2 subfamily. In terms of processing, phosphorylation at Thr-122 by PLK1 is required for activity in the correction of kinetochore-microtubules attachment errors, while phosphorylation at Ser-201 also by PLK1 is required for the kinetochore localization and activity in prometaphase.

The protein localises to the cytoplasm. Its subcellular location is the cytoskeleton. The protein resides in the microtubule organizing center. It is found in the centrosome. It localises to the spindle. The protein localises to the chromosome. Its subcellular location is the centromere. The protein resides in the kinetochore. Its function is as follows. Plus end-directed microtubule-dependent motor required for spindle assembly and chromosome movement during mitosis. Has microtubule depolymerization activity. Plays a role in chromosome congression. This chain is Kinesin-like protein KIF2B (KIF2B), found in Macaca fascicularis (Crab-eating macaque).